Here is a 230-residue protein sequence, read N- to C-terminus: Ribosomal RNA large subunit methyltransferase E (230 aa).

S-adenosyl-L-methionine-binding residues include G82, W84, D100, D116, and D140. The active-site Proton acceptor is K180.

Belongs to the class I-like SAM-binding methyltransferase superfamily. RNA methyltransferase RlmE family.

It localises to the cytoplasm. The catalysed reaction is uridine(2552) in 23S rRNA + S-adenosyl-L-methionine = 2'-O-methyluridine(2552) in 23S rRNA + S-adenosyl-L-homocysteine + H(+). Specifically methylates the uridine in position 2552 of 23S rRNA at the 2'-O position of the ribose in the fully assembled 50S ribosomal subunit. The chain is Ribosomal RNA large subunit methyltransferase E from Granulibacter bethesdensis (strain ATCC BAA-1260 / CGDNIH1).